Reading from the N-terminus, the 209-residue chain is MTLASQIATQLLDIKAIYLKPEDPFTWASGIKSPIYTDNRVTLSYPKTRDLIENGFVETIRAHFPEVEVIAGTATAGIPHGAIIADKMTLPFAYIRSKPKDHGAGNQIEGRVLKGQKMVIIEDLISTGGSVLDAAAAASREGADVLGVVAIFTYELPKASQNFKEAGIKLITLSNYTELIAVAKLQGYITNDGLHLLKKFKEDQVNWQQ.

5-phospho-alpha-D-ribose 1-diphosphate is bound by residues R96, K100, H102, and 122–130 (EDLISTGGS). Position 126 (S126) interacts with orotate.

This sequence belongs to the purine/pyrimidine phosphoribosyltransferase family. PyrE subfamily. As to quaternary structure, homodimer. Mg(2+) is required as a cofactor.

The catalysed reaction is orotidine 5'-phosphate + diphosphate = orotate + 5-phospho-alpha-D-ribose 1-diphosphate. It participates in pyrimidine metabolism; UMP biosynthesis via de novo pathway; UMP from orotate: step 1/2. Catalyzes the transfer of a ribosyl phosphate group from 5-phosphoribose 1-diphosphate to orotate, leading to the formation of orotidine monophosphate (OMP). This Streptococcus pyogenes serotype M2 (strain MGAS10270) protein is Orotate phosphoribosyltransferase.